An 88-amino-acid polypeptide reads, in one-letter code: Small ribosomal subunit protein uS15 (88 aa).

The protein belongs to the universal ribosomal protein uS15 family. As to quaternary structure, part of the 30S ribosomal subunit. Forms a bridge to the 50S subunit in the 70S ribosome, contacting the 23S rRNA.

One of the primary rRNA binding proteins, it binds directly to 16S rRNA where it helps nucleate assembly of the platform of the 30S subunit by binding and bridging several RNA helices of the 16S rRNA. Functionally, forms an intersubunit bridge (bridge B4) with the 23S rRNA of the 50S subunit in the ribosome. The sequence is that of Small ribosomal subunit protein uS15 from Borreliella burgdorferi (strain ATCC 35210 / DSM 4680 / CIP 102532 / B31) (Borrelia burgdorferi).